An 82-amino-acid polypeptide reads, in one-letter code: Small ribosomal subunit protein uS12 (82 aa).

Aspartate 59 carries the 3-methylthioaspartic acid modification.

This sequence belongs to the universal ribosomal protein uS12 family. In terms of assembly, part of the 30S ribosomal subunit. Contacts proteins S8 and S17. May interact with IF1 in the 30S initiation complex.

In terms of biological role, with S4 and S5 plays an important role in translational accuracy. Interacts with and stabilizes bases of the 16S rRNA that are involved in tRNA selection in the A site and with the mRNA backbone. Located at the interface of the 30S and 50S subunits, it traverses the body of the 30S subunit contacting proteins on the other side and probably holding the rRNA structure together. The combined cluster of proteins S8, S12 and S17 appears to hold together the shoulder and platform of the 30S subunit. The polypeptide is Small ribosomal subunit protein uS12 (rpsL) (Actinobacillus pleuropneumoniae (Haemophilus pleuropneumoniae)).